We begin with the raw amino-acid sequence, 252 residues long: 5'-nucleotidase SurE (252 aa).

4 residues coordinate a divalent metal cation: Asp8, Asp9, Ser39, and Asn91.

Belongs to the SurE nucleotidase family. Requires a divalent metal cation as cofactor.

The protein resides in the cytoplasm. It catalyses the reaction a ribonucleoside 5'-phosphate + H2O = a ribonucleoside + phosphate. Its function is as follows. Nucleotidase that shows phosphatase activity on nucleoside 5'-monophosphates. The sequence is that of 5'-nucleotidase SurE from Legionella pneumophila (strain Corby).